A 105-amino-acid polypeptide reads, in one-letter code: Replication restart protein PriB (105 aa).

An SSB domain is found at 1-102 (MTTNRLVLSG…LHAEQIELID (102 aa)).

Belongs to the PriB family. As to quaternary structure, homodimer. Interacts with PriA and DnaT. Component of the replication restart primosome. Primosome assembly occurs via a 'hand-off' mechanism. PriA binds to replication forks, subsequently PriB then DnaT bind; DnaT then displaces ssDNA to generate the helicase loading substrate.

Functionally, involved in the restart of stalled replication forks, which reloads the replicative helicase on sites other than the origin of replication; the PriA-PriB pathway is the major replication restart pathway. During primosome assembly it facilitates complex formation between PriA and DnaT on DNA; stabilizes PriA on DNA. Stimulates the DNA unwinding activity of PriA helicase. This is Replication restart protein PriB from Photorhabdus laumondii subsp. laumondii (strain DSM 15139 / CIP 105565 / TT01) (Photorhabdus luminescens subsp. laumondii).